A 409-amino-acid polypeptide reads, in one-letter code: Glucose-1-phosphate adenylyltransferase (409 aa).

Alpha-D-glucose 1-phosphate contacts are provided by residues Gly-168, 183–184 (EK), and Ser-201.

The protein belongs to the bacterial/plant glucose-1-phosphate adenylyltransferase family. As to quaternary structure, homotetramer.

It carries out the reaction alpha-D-glucose 1-phosphate + ATP + H(+) = ADP-alpha-D-glucose + diphosphate. Its pathway is glycan biosynthesis; glycogen biosynthesis. In terms of biological role, involved in the biosynthesis of ADP-glucose, a building block required for the elongation reactions to produce glycogen. Catalyzes the reaction between ATP and alpha-D-glucose 1-phosphate (G1P) to produce pyrophosphate and ADP-Glc. The polypeptide is Glucose-1-phosphate adenylyltransferase (Corynebacterium glutamicum (strain R)).